Here is a 79-residue protein sequence, read N- to C-terminus: UPF0154 protein SAK_1616 (79 aa).

The chain crosses the membrane as a helical span at residues 5 to 25; it reads IWILLIIVALFGGLVGGIFIA.

This sequence belongs to the UPF0154 family.

It is found in the cell membrane. This Streptococcus agalactiae serotype Ia (strain ATCC 27591 / A909 / CDC SS700) protein is UPF0154 protein SAK_1616.